We begin with the raw amino-acid sequence, 874 residues long: Alanine--tRNA ligase (874 aa).

His562, His566, Cys665, and His669 together coordinate Zn(2+).

Belongs to the class-II aminoacyl-tRNA synthetase family. Zn(2+) serves as cofactor.

Its subcellular location is the cytoplasm. The catalysed reaction is tRNA(Ala) + L-alanine + ATP = L-alanyl-tRNA(Ala) + AMP + diphosphate. Functionally, catalyzes the attachment of alanine to tRNA(Ala) in a two-step reaction: alanine is first activated by ATP to form Ala-AMP and then transferred to the acceptor end of tRNA(Ala). Also edits incorrectly charged Ser-tRNA(Ala) and Gly-tRNA(Ala) via its editing domain. In Pseudomonas paraeruginosa (strain DSM 24068 / PA7) (Pseudomonas aeruginosa (strain PA7)), this protein is Alanine--tRNA ligase.